Consider the following 266-residue polypeptide: 4-hydroxy-tetrahydrodipicolinate reductase (266 aa).

NAD(+) is bound by residues 8–13 (GAAGRM) and Glu33. Arg34 lines the NADP(+) pocket. Residues 97-99 (GST) and 121-124 (APNM) contribute to the NAD(+) site. His154 serves as the catalytic Proton donor/acceptor. His155 contributes to the (S)-2,3,4,5-tetrahydrodipicolinate binding site. The active-site Proton donor is Lys158. 164–165 (GT) provides a ligand contact to (S)-2,3,4,5-tetrahydrodipicolinate.

This sequence belongs to the DapB family.

The protein localises to the cytoplasm. It catalyses the reaction (S)-2,3,4,5-tetrahydrodipicolinate + NAD(+) + H2O = (2S,4S)-4-hydroxy-2,3,4,5-tetrahydrodipicolinate + NADH + H(+). The enzyme catalyses (S)-2,3,4,5-tetrahydrodipicolinate + NADP(+) + H2O = (2S,4S)-4-hydroxy-2,3,4,5-tetrahydrodipicolinate + NADPH + H(+). It functions in the pathway amino-acid biosynthesis; L-lysine biosynthesis via DAP pathway; (S)-tetrahydrodipicolinate from L-aspartate: step 4/4. Functionally, catalyzes the conversion of 4-hydroxy-tetrahydrodipicolinate (HTPA) to tetrahydrodipicolinate. This is 4-hydroxy-tetrahydrodipicolinate reductase from Geobacter metallireducens (strain ATCC 53774 / DSM 7210 / GS-15).